The sequence spans 146 residues: Hemoglobin subunit beta (146 aa).

N-acetylvaline is present on Val1. The Globin domain occupies 2 to 146; it reads HLTDAEKAAV…VATALAHKYH (145 aa). Residue Ser44 is modified to Phosphoserine. Lys59 bears the N6-acetyllysine mark. Position 63 (His63) interacts with heme b. Lys82 bears the N6-acetyllysine mark. His92 contributes to the heme b binding site. Cys93 carries the post-translational modification S-nitrosocysteine. An N6-acetyllysine modification is found at Lys144.

Belongs to the globin family. In terms of assembly, heterotetramer of two alpha chains and two beta chains. In terms of tissue distribution, red blood cells.

In terms of biological role, involved in oxygen transport from the lung to the various peripheral tissues. The polypeptide is Hemoglobin subunit beta (HBB) (Spalax ehrenbergi (Middle East blind mole rat)).